Reading from the N-terminus, the 417-residue chain is Sulfate adenylyltransferase (417 aa).

This sequence belongs to the sulfate adenylyltransferase family.

The catalysed reaction is sulfate + ATP + H(+) = adenosine 5'-phosphosulfate + diphosphate. The protein operates within sulfur metabolism; hydrogen sulfide biosynthesis; sulfite from sulfate: step 1/3. In Psychrobacter cryohalolentis (strain ATCC BAA-1226 / DSM 17306 / VKM B-2378 / K5), this protein is Sulfate adenylyltransferase.